We begin with the raw amino-acid sequence, 228 residues long: Protein N-lysine methyltransferase METTL21D (228 aa).

N-acetylalanine is present on alanine 2. S-adenosyl-L-methionine is bound by residues tryptophan 43, 75 to 77, aspartate 96, tryptophan 126, alanine 142, and tyrosine 147; that span reads GSG.

Belongs to the methyltransferase superfamily. METTL21 family. As to quaternary structure, interacts with ALKBH6. Interacts with ASPSCR1 and UBXN6; interaction with ASPSCR1, but not with UBXN6, enhances VCP methylation. In terms of tissue distribution, widely expressed.

It localises to the cytoplasm. The enzyme catalyses L-lysyl-[protein] + 3 S-adenosyl-L-methionine = N(6),N(6),N(6)-trimethyl-L-lysyl-[protein] + 3 S-adenosyl-L-homocysteine + 3 H(+). Its function is as follows. Protein N-lysine methyltransferase that specifically trimethylates 'Lys-315' of VCP/p97; this modification may decrease VCP ATPase activity. This chain is Protein N-lysine methyltransferase METTL21D (Vcpkmt), found in Mus musculus (Mouse).